The following is a 599-amino-acid chain: Elongation factor 4 (599 aa).

In terms of domain architecture, tr-type G spans 5-187; the sequence is DLIRNFSIVA…AIVTRLPPPK (183 aa). GTP-binding positions include 17 to 22 and 134 to 137; these read DHGKST and NKID.

Belongs to the TRAFAC class translation factor GTPase superfamily. Classic translation factor GTPase family. LepA subfamily.

The protein localises to the cell inner membrane. The catalysed reaction is GTP + H2O = GDP + phosphate + H(+). Required for accurate and efficient protein synthesis under certain stress conditions. May act as a fidelity factor of the translation reaction, by catalyzing a one-codon backward translocation of tRNAs on improperly translocated ribosomes. Back-translocation proceeds from a post-translocation (POST) complex to a pre-translocation (PRE) complex, thus giving elongation factor G a second chance to translocate the tRNAs correctly. Binds to ribosomes in a GTP-dependent manner. The polypeptide is Elongation factor 4 (Cereibacter sphaeroides (strain ATCC 17025 / ATH 2.4.3) (Rhodobacter sphaeroides)).